A 182-amino-acid chain; its full sequence is Lipid A acyltransferase PagP (182 aa).

The signal sequence occupies residues 1–21 (MTQYFRSLAFFLLPVPATAMA). Cys22 carries the N-palmitoyl cysteine lipid modification. Cys22 carries the S-diacylglycerol cysteine lipid modification. Catalysis depends on residues His55, Asp98, and Ser99.

This sequence belongs to the lipid A palmitoyltransferase family. As to quaternary structure, homodimer.

The protein localises to the cell outer membrane. It carries out the reaction a lipid A + a 1,2-diacyl-sn-glycero-3-phosphocholine = a hepta-acyl lipid A + a 2-acyl-sn-glycero-3-phosphocholine. The enzyme catalyses a lipid IVA + a 1,2-diacyl-sn-glycero-3-phosphocholine = a lipid IVB + a 2-acyl-sn-glycero-3-phosphocholine. It catalyses the reaction a lipid IIA + a 1,2-diacyl-sn-glycero-3-phosphocholine = a lipid IIB + a 2-acyl-sn-glycero-3-phosphocholine. Transfers a fatty acid residue from the sn-1 position of a phospholipid to the N-linked hydroxyfatty acid chain on the proximal unit of lipid A or its precursors. The chain is Lipid A acyltransferase PagP from Bordetella pertussis (strain CS).